The primary structure comprises 184 residues: MATIVDQAKAQMAKSVESTKENFSGIRTGRANPALLNGITVDYYGAPTPLKAVATIGVPEPRTLAVTPFDASQANAVEKALRDSDLGASPRRDGNVIRLTMPELTEERRKEYVKIAKGKAEDGKVAVRNIRRKAKESLDKAIKDGDMGEDEGDRLLKELDKVTKQTTDELDALLETKQKEIMEV.

It belongs to the RRF family.

The protein resides in the cytoplasm. Its function is as follows. Responsible for the release of ribosomes from messenger RNA at the termination of protein biosynthesis. May increase the efficiency of translation by recycling ribosomes from one round of translation to another. The polypeptide is Ribosome-recycling factor (Bifidobacterium adolescentis (strain ATCC 15703 / DSM 20083 / NCTC 11814 / E194a)).